We begin with the raw amino-acid sequence, 130 residues long: Small ribosomal subunit protein eS17 (130 aa).

It belongs to the eukaryotic ribosomal protein eS17 family.

The chain is Small ribosomal subunit protein eS17 (RPS17) from Theileria parva (East coast fever infection agent).